We begin with the raw amino-acid sequence, 934 residues long: Sorting nexin-14 (934 aa).

2 helical membrane-spanning segments follow: residues 27–47 (YPVI…LNQY) and 48–68 (LHIL…YCSL). Residues 129–303 (PSKVDASISE…MVLIFIDDSP (175 aa)) enclose the PXA domain. Positions 335–467 (DLKEIREQQD…CHSDEYFRHL (133 aa)) constitute an RGS domain. The 121-residue stretch at 557–677 (WTISIPYVDF…DFLSPFSMES (121 aa)) folds into the PX domain.

It belongs to the sorting nexin family.

It localises to the lysosome membrane. The protein localises to the late endosome membrane. It is found in the cell projection. Its subcellular location is the dendrite. Functionally, plays a role in maintaining normal neuronal excitability and synaptic transmission. May be involved in several stages of intracellular trafficking. Required for autophagosome clearance, possibly by mediating the fusion of lysosomes with autophagosomes. Binds phosphatidylinositol 3,5-bisphosphate (PtdIns(3,5)P2), a key component of late endosomes/lysosomes. Does not bind phosphatidylinositol 3-phosphate (PtdIns(3P)). The chain is Sorting nexin-14 from Danio rerio (Zebrafish).